The sequence spans 333 residues: Zinc-type alcohol dehydrogenase-like protein SACOL2177 (333 aa).

It belongs to the zinc-containing alcohol dehydrogenase family. Quinone oxidoreductase subfamily.

In Staphylococcus aureus (strain COL), this protein is Zinc-type alcohol dehydrogenase-like protein SACOL2177.